The following is a 253-amino-acid chain: Small ribosomal subunit protein uS2 (253 aa).

The protein belongs to the universal ribosomal protein uS2 family.

This is Small ribosomal subunit protein uS2 from Parvibaculum lavamentivorans (strain DS-1 / DSM 13023 / NCIMB 13966).